Consider the following 183-residue polypeptide: MSSHSQEPVGEENFDDSEYDRPSKSQVKREMHALLDLGKELVELSPERLRQLPLEERLYEAIREAQRTTGREGRRRQIHFVGKLMRSAPAEAIRAQLDTWRNGSREETAAMHRLEALRERLLKDDDALTAVLQRNPDADIQHLRALIRAARKEAAANAALSQGQEPQRKQYRALFQALKNLSA.

The disordered stretch occupies residues 1–27 (MSSHSQEPVGEENFDDSEYDRPSKSQV). Acidic residues predominate over residues 9–18 (VGEENFDDSE).

Belongs to the DarP family.

The protein resides in the cytoplasm. Member of a network of 50S ribosomal subunit biogenesis factors which assembles along the 30S-50S interface, preventing incorrect 23S rRNA structures from forming. Promotes peptidyl transferase center (PTC) maturation. This is Dual-action ribosomal maturation protein DarP from Bordetella parapertussis (strain 12822 / ATCC BAA-587 / NCTC 13253).